The sequence spans 576 residues: Protein NRT1/ PTR FAMILY 2.12 (576 aa).

The next 11 helical transmembrane spans lie at 58 to 78 (FNVYYLWMGLTNFAPLLGALI), 89 to 109 (IAYASLFSILGLMTVTLTACL), 130 to 150 (KLQLGILFLGLGFLSIGSGGI), 176 to 196 (FFNWYYLTLTMVLIFSHTVVV), 203 to 223 (WVIGFSIPTSLMACAVVLFFV), 329 to 349 (VWSAGIISIVAMTTQATFMVF), 364 to 384 (IPAASITVISYITIGIWVPIY), 406 to 426 (MGIGIVFAILSMFTAGFVEGV), 441 to 461 (WLALPLILMGLCESFNFIGLI), 475 to 495 (IANSLFPLSFAAANYLSSLLV), and 522 to 542 (YFYYLIAVLGVVNLVYFWYCA).

The protein belongs to the major facilitator superfamily. Proton-dependent oligopeptide transporter (POT/PTR) (TC 2.A.17) family. Expressed in flowers and siliques. Expressed in vascular bundle of the siliques and in funiculus.

It is found in the cell membrane. In terms of biological role, low-affinity proton-dependent nitrate transporter. Not involved in dipeptides transport. Involved in delivering nitrate for seed development. The sequence is that of Protein NRT1/ PTR FAMILY 2.12 (NPF2.12) from Arabidopsis thaliana (Mouse-ear cress).